Reading from the N-terminus, the 396-residue chain is Dimethyladenosine transferase 2, mitochondrial (396 aa).

Residues 1–19 (MWIPVVGLPRRLRLSALAG) constitute a mitochondrion transit peptide. The tract at residues 44–64 (LSDSSPQLWPEPDFRNPPRKA) is disordered. V75, E124, and D150 together coordinate S-adenosyl-L-methionine. Residues 330–331 (RR) form a DNA-binding region.

It belongs to the class I-like SAM-binding methyltransferase superfamily. rRNA adenine N(6)-methyltransferase family. KsgA subfamily. In terms of assembly, homodimer. Component of the mitochondrial transcription initiation complex, composed at least of TFB2M, TFAM and POLRMT. In this complex TFAM recruits POLRMT to the promoter whereas TFB2M induces structural changes in POLRMT to enable promoter opening and trapping of the DNA non-template strand. Interacts with mitochondrial RNA polymerase POLRMT. Interacts with TFAM. As to expression, ubiquitously expressed.

It is found in the mitochondrion. The catalysed reaction is adenosine in rRNA + S-adenosyl-L-methionine = N(6)-methyladenosine in rRNA + S-adenosyl-L-homocysteine + H(+). In terms of biological role, S-adenosyl-L-methionine-dependent rRNA methyltransferase which may methylate two specific adjacent adenosines in the loop of a conserved hairpin near the 3'-end of 12S mitochondrial rRNA. Component of the mitochondrial transcription initiation complex, composed at least of TFB2M, TFAM and POLRMT that is required for basal transcription of mitochondrial DNA. In this complex, TFAM recruits POLRMT to a specific promoter whereas TFB2M induces structural changes in POLRMT to enable promoter opening and trapping of the DNA non-template strand. Stimulates transcription independently of the methyltransferase activity. This chain is Dimethyladenosine transferase 2, mitochondrial, found in Homo sapiens (Human).